A 350-amino-acid polypeptide reads, in one-letter code: Beta-hexosaminidase (350 aa).

Substrate-binding positions include D73, R81, R148, and 178 to 179; that span reads KH. The active-site Proton donor/acceptor is H191. D262 serves as the catalytic Nucleophile.

It belongs to the glycosyl hydrolase 3 family. NagZ subfamily.

The protein resides in the cytoplasm. It catalyses the reaction Hydrolysis of terminal non-reducing N-acetyl-D-hexosamine residues in N-acetyl-beta-D-hexosaminides.. It functions in the pathway cell wall biogenesis; peptidoglycan recycling. Plays a role in peptidoglycan recycling by cleaving the terminal beta-1,4-linked N-acetylglucosamine (GlcNAc) from peptide-linked peptidoglycan fragments, giving rise to free GlcNAc, anhydro-N-acetylmuramic acid and anhydro-N-acetylmuramic acid-linked peptides. This is Beta-hexosaminidase from Bordetella avium (strain 197N).